Here is a 103-residue protein sequence, read N- to C-terminus: Large ribosomal subunit protein uL24 (103 aa).

The protein belongs to the universal ribosomal protein uL24 family. Part of the 50S ribosomal subunit.

One of two assembly initiator proteins, it binds directly to the 5'-end of the 23S rRNA, where it nucleates assembly of the 50S subunit. Its function is as follows. One of the proteins that surrounds the polypeptide exit tunnel on the outside of the subunit. This Listeria innocua serovar 6a (strain ATCC BAA-680 / CLIP 11262) protein is Large ribosomal subunit protein uL24.